The chain runs to 97 residues: Peptide YY (97 aa).

Residues 1–28 (MMSGRRSWPAMATVLLTLLVCLGELVDA) form the signal peptide. Residue S41 is modified to Phosphoserine. A Phenylalanine amide modification is found at F64. Positions 68 to 97 (DFSEALLSILLFPDREDPPVKSRPEGAYLW) are excised as a propeptide.

This sequence belongs to the NPY family.

It localises to the secreted. This gut peptide inhibits exocrine pancreatic secretion, has a vasoconstrictory action and inhibitis jejunal and colonic mobility. The chain is Peptide YY (PYY) from Bos taurus (Bovine).